A 325-amino-acid polypeptide reads, in one-letter code: Elongation factor P--(R)-beta-lysine ligase (325 aa).

A substrate-binding site is contributed by 76–78 (SPE). ATP is bound by residues 100–102 (RNE) and N109. Y118 is a binding site for substrate. 244-245 (EL) serves as a coordination point for ATP. E251 serves as a coordination point for substrate. G300 lines the ATP pocket.

The protein belongs to the class-II aminoacyl-tRNA synthetase family. EpmA subfamily. As to quaternary structure, homodimer.

It catalyses the reaction D-beta-lysine + L-lysyl-[protein] + ATP = N(6)-((3R)-3,6-diaminohexanoyl)-L-lysyl-[protein] + AMP + diphosphate + H(+). With EpmB is involved in the beta-lysylation step of the post-translational modification of translation elongation factor P (EF-P) on 'Lys-34'. Catalyzes the ATP-dependent activation of (R)-beta-lysine produced by EpmB, forming a lysyl-adenylate, from which the beta-lysyl moiety is then transferred to the epsilon-amino group of EF-P 'Lys-34'. The protein is Elongation factor P--(R)-beta-lysine ligase of Salmonella arizonae (strain ATCC BAA-731 / CDC346-86 / RSK2980).